The sequence spans 142 residues: Large ribosomal subunit protein uL11 (142 aa).

This sequence belongs to the universal ribosomal protein uL11 family. As to quaternary structure, part of the ribosomal stalk of the 50S ribosomal subunit. Interacts with L10 and the large rRNA to form the base of the stalk. L10 forms an elongated spine to which L12 dimers bind in a sequential fashion forming a multimeric L10(L12)X complex. Post-translationally, one or more lysine residues are methylated.

Its function is as follows. Forms part of the ribosomal stalk which helps the ribosome interact with GTP-bound translation factors. This Serratia marcescens protein is Large ribosomal subunit protein uL11.